The following is a 338-amino-acid chain: Glycerol-3-phosphate dehydrogenase [NAD(P)+] (338 aa).

S13, W14, and K108 together coordinate NADPH. Positions 108, 139, and 141 each coordinate sn-glycerol 3-phosphate. A143 contributes to the NADPH binding site. K194, D247, S257, R258, and N259 together coordinate sn-glycerol 3-phosphate. K194 (proton acceptor) is an active-site residue. R258 provides a ligand contact to NADPH. Residues V282 and E284 each contribute to the NADPH site.

This sequence belongs to the NAD-dependent glycerol-3-phosphate dehydrogenase family.

It localises to the cytoplasm. It catalyses the reaction sn-glycerol 3-phosphate + NAD(+) = dihydroxyacetone phosphate + NADH + H(+). It carries out the reaction sn-glycerol 3-phosphate + NADP(+) = dihydroxyacetone phosphate + NADPH + H(+). It participates in membrane lipid metabolism; glycerophospholipid metabolism. Functionally, catalyzes the reduction of the glycolytic intermediate dihydroxyacetone phosphate (DHAP) to sn-glycerol 3-phosphate (G3P), the key precursor for phospholipid synthesis. This is Glycerol-3-phosphate dehydrogenase [NAD(P)+] from Listeria innocua serovar 6a (strain ATCC BAA-680 / CLIP 11262).